Here is a 390-residue protein sequence, read N- to C-terminus: uncharacterized protein (390 aa).

A run of 12 helical transmembrane segments spans residues 4-24 (IWLFFSVMFVIGTDTFLLSPL), 40-60 (GWMVSAYALGYALFAFIAGPI), 68-88 (TVMLWGLAGFIVSTFLCGIAP), 98-118 (FAAGVSAAFVTPQIWASIPVI), 130-150 (IATAGLAASQMLGLPIGGFLA), 159-179 (FVLSACSLILLLILAAVMPGI), 205-225 (VILLAYFLFQTGNFASFSFLG), 236-256 (VSQIGAAMLVLGLGNMLGSLI), 273-293 (GMLLMGALYFALPFFPNLFLV), 295-315 (AGFFLTFFTAGIIFPLMMGVF), 329-349 (LSNAAMYAGTTVGTSIAGFLY), and 356-376 (GAVTGFTAILFILSMTLYQTI).

It belongs to the major facilitator superfamily.

It is found in the cell membrane. This is an uncharacterized protein from Bacillus subtilis (strain 168).